Consider the following 718-residue polypeptide: Receptor-like protein 36 (718 aa).

The N-terminal stretch at 1-26 (MIRSLSYCFLTIYFFLSILPLPNTIA) is a signal peptide. The Extracellular portion of the chain corresponds to 27–695 (CPTRLLCRSD…SESEDQLLNW (669 aa)). LRR repeat units follow at residues 70-94 (DAILGELVLSRCKLQGEIPSSIGNL), 95-118 (SHLTYLDLSNNQLVGEVPASIGNL), 120-141 (QLESMRLWDNDLKGNIPTSFAN), 143-165 (TKLSELYLFGNQFTGGDTVLANL), 166-188 (TSLSIIDLSLNYFKSSISADLSG), 189-213 (LHNLERFSVYNNSFSGPFPLSLLMI), 214-238 (PSLVHIDLSQNHFEGPIDFRNTFSL), 239-261 (SRLRVLYVGFNNLDGLIPESISK), 262-286 (LVNLEYLDVSHNNFGGQVPRSISKV), 288-310 (NLTSVDLSYNKLEGQVPDFVWRS), 312-334 (KLDYVDLSYNSFNCFAKSVEVID), 335-359 (GASLTMLNLGSNSVDGPFPKWICKV), 360-383 (KDLYALDLSNNHFNGSIPQCLKYS), 384-406 (TYFHTLNLRNNSLSGVLPNLFIK), 407-431 (DSQLRSLDVSSNNLVGKLPKSLINC), 433-454 (RIEFLNVKGNKIMDTFPFWLGS), 455-480 (LPYLKVLMLGSNAFYGPVYNPSAYLG), and 481-505 (FPSIRIIDISNNNFVGSLPQDYFAN). N93 carries N-linked (GlcNAc...) asparagine glycosylation. N141 and N164 each carry an N-linked (GlcNAc...) asparagine glycan. N-linked (GlcNAc...) asparagine glycosylation occurs at N199. N-linked (GlcNAc...) asparagine glycosylation is present at N288. N-linked (GlcNAc...) asparagine glycans are attached at residues N373 and N393. N-linked (GlcNAc...) asparagine glycosylation occurs at N528. LRR repeat units follow at residues 550–574 (FEGFNAIDFSGNRFSGHIPGSIGLL), 575–598 (SELRLLNLSGNAFTGNIPPSLANI), 599–622 (TNLESLDLSRNNLSGEIPISLGKL), and 624–647 (FLSNTNFSYNHLEGLIPQSTQFAT). 5 N-linked (GlcNAc...) asparagine glycosylation sites follow: N581, N597, N610, N629, and N649. Residues 696–716 (IAAAIAFGPGMFCGLVIGHIF) form a helical membrane-spanning segment. Over 717-718 (TS) the chain is Cytoplasmic.

This sequence belongs to the RLP family.

The protein resides in the cell membrane. This Arabidopsis thaliana (Mouse-ear cress) protein is Receptor-like protein 36.